Here is a 49-residue protein sequence, read N- to C-terminus: Metallothionein (49 aa).

The beta stretch occupies residues 1 to 16; it reads SCAGSCKCKNCRCRSC. Residues cysteine 2, cysteine 6, cysteine 8, cysteine 11, cysteine 13, cysteine 16, cysteine 20, cysteine 21, cysteine 23, cysteine 24, cysteine 28, cysteine 31, cysteine 35, cysteine 37, cysteine 45, cysteine 47, and cysteine 48 each coordinate a divalent metal cation. The interval 17–49 is alpha; sequence RKSCCSCCPAGCNNCAKGCVCKEPASSKCSCCH.

The protein belongs to the metallothionein superfamily. Type 1 family.

Metallothioneins have a high content of cysteine residues that bind various heavy metals. The chain is Metallothionein from Phasianus colchicus colchicus (Black-necked pheasant).